The following is a 682-amino-acid chain: Protein asunder (682 aa).

Residues 517-570 (NGARLKLSKAKDQYRLLYRELEQLIHLNATTVHHKNLLESLQSLRAAYGEAKSE) are a coiled coil. The span at 571–583 (PNSSLLRSYTESP) shows a compositional bias: polar residues. The tract at residues 571–612 (PNSSLLRSYTESPHSPERLEPIPSGGSSGSNSNSLLKASKRR) is disordered. The short motif at 606–612 (LKASKRR) is the Nuclear localization signal (NLS) element.

Belongs to the Integrator subunit 13 family. As to quaternary structure, belongs to the multiprotein complex Integrator, at least composed of IntS1, IntS2, IntS3, IntS4, omd/IntS5, IntS6, defl/IntS7, IntS8, IntS9, IntS10, IntS11, IntS12, asun/IntS13, IntS14 and IntS15. The core complex associates with protein phosphatase 2A subunits mts/PP2A and Pp2A-29B, to form the Integrator-PP2A (INTAC) complex. In terms of processing, phosphorylated.

It localises to the nucleus. The protein localises to the cytoplasm. It is found in the perinuclear region. Functionally, component of the integrator complex, a multiprotein complex that terminates RNA polymerase II (Pol II) transcription in the promoter-proximal region of genes. The integrator complex provides a quality checkpoint during transcription elongation by driving premature transcription termination of transcripts that are unfavorably configured for transcriptional elongation: the complex terminates transcription by (1) catalyzing dephosphorylation of the C-terminal domain (CTD) of Pol II subunit Polr2A/Rbp1 and Spt5, and (2) degrading the exiting nascent RNA transcript via endonuclease activity. The integrator complex is also involved in the 3'-end processing of the U7 snRNA, and also the spliceosomal snRNAs U1, U2, U4 and U5. This chain is Protein asunder (asun), found in Drosophila ananassae (Fruit fly).